Consider the following 208-residue polypeptide: uncharacterized protein (208 aa).

An N-terminal signal peptide occupies residues 1 to 16 (MTRVALLTTGRELSQA). 2 disordered regions span residues 1-95 (MTRV…VRGQ) and 145-176 (RVTKVSSSGPNSTPLPAARIGPGTNNAPSAAD). Low complexity predominate over residues 16–25 (AAPPARARTP). A compositionally biased stretch (basic and acidic residues) spans 32 to 43 (RGERPDDGGHAP). Residues 44-54 (HRDRRVNQRRR) are compositionally biased toward basic residues. Residues 55–95 (QVGDRRAQRGVDEHPWRRPDERPNDHLPQRNSERPEGVRGQ) show a composition bias toward basic and acidic residues. Polar residues-rich tracts occupy residues 148–158 (KVSSSGPNSTP) and 167–176 (GTNNAPSAAD).

This is an uncharacterized protein from Mycobacterium tuberculosis (strain CDC 1551 / Oshkosh).